Consider the following 461-residue polypeptide: Fumarate hydratase class II (461 aa).

Substrate is bound by residues 98–100, 129–132, 139–141, and T187; these read SGT, HPND, and SSN. A disordered region spans residues 120 to 140; sequence SKKGGKSPVHPNDHVNKGQSS. H188 acts as the Proton donor/acceptor in catalysis. The active site involves S318. Substrate contacts are provided by residues S319 and 324–326; that span reads KVN.

This sequence belongs to the class-II fumarase/aspartase family. Fumarase subfamily. In terms of assembly, homotetramer.

The protein resides in the cytoplasm. It carries out the reaction (S)-malate = fumarate + H2O. The protein operates within carbohydrate metabolism; tricarboxylic acid cycle; (S)-malate from fumarate: step 1/1. Functionally, involved in the TCA cycle. Catalyzes the stereospecific interconversion of fumarate to L-malate. The protein is Fumarate hydratase class II of Rickettsia felis (strain ATCC VR-1525 / URRWXCal2) (Rickettsia azadi).